The chain runs to 465 residues: Interferon-inducible GTPase 5 (465 aa).

Residues 53–235 (TRLEVGVTGE…PLLMSTWERD (183 aa)) form the IRG-type G domain. GTP is bound by residues 62–69 (ESGAGKSS), 87–91 (TGVVE), 169–171 (KVD), and 216–218 (SNL). Phosphoserine occurs at positions 247 and 304. A disordered region spans residues 405–438 (EEEEDTQPDVSLEAAGDNGVEKRGSGEGSMEEAP).

This sequence belongs to the TRAFAC class dynamin-like GTPase superfamily. IRG family.

It localises to the cell projection. It is found in the cilium. The protein localises to the flagellum. The protein resides in the lipid droplet. The enzyme catalyses GTP + H2O = GDP + phosphate + H(+). In terms of biological role, required for sperm motility and therefore male fertility, via positive regulation of spermatozoa fibrous sheath formation. The polypeptide is Interferon-inducible GTPase 5 (IRGC) (Bos taurus (Bovine)).